A 364-amino-acid polypeptide reads, in one-letter code: Transcription factor TGA4 (364 aa).

Positions 39–79 (PGSIIIPTNEKPDSLSEDTSHGTEGTPHKFDQEASTSRHPD) are disordered. The segment covering 48–79 (EKPDSLSEDTSHGTEGTPHKFDQEASTSRHPD) has biased composition (basic and acidic residues). Residues 78-141 (PDKIQRRLAQ…NGVDTNALSF (64 aa)) enclose the bZIP domain. 2 coiled-coil regions span residues 79-127 (DKIQ…RQQG) and 257-277 (NLRQ…EKLQ). A basic motif region spans residues 80–100 (KIQRRLAQNREAARKSRLRKK). The tract at residues 106–120 (LETSRLKLIHLEQEL) is leucine-zipper. A DOG1 domain is found at 149 to 359 (IVAFEMEYGH…RALSSSWAAR (211 aa)). The cysteines at positions 256 and 262 are disulfide-linked.

This sequence belongs to the bZIP family. As to quaternary structure, binds DNA as a dimer. Interaction with the Dof domain proteins OBP1, OBP2 or OBP3 enhances the binding to the ocs element. Interacts with RAP2-3/EPB, an ethylene-responsive element binding protein. The reduced form interacts with NPR1. In terms of tissue distribution, predominantly expressed in roots.

It is found in the nucleus. In terms of biological role, transcriptional activator that binds specifically to the DNA sequence 5'-TGACG-3'. Recognizes ocs elements like the as-1 motif of the cauliflower mosaic virus 35S promoter. Binding to the as-1-like cis elements mediate auxin- and salicylic acid-inducible transcription. May be involved in the induction of the systemic acquired resistance (SAR) via its interaction with NPR1. Could also bind to the Hex-motif (5'-TGACGTGG-3') another cis-acting element found in plant histone promoters. This chain is Transcription factor TGA4 (TGA4), found in Arabidopsis thaliana (Mouse-ear cress).